A 500-amino-acid polypeptide reads, in one-letter code: L-arabinose isomerase (500 aa).

Residues Glu-306, Glu-333, His-350, and His-450 each contribute to the Mn(2+) site.

The protein belongs to the arabinose isomerase family. Homohexamer. Mn(2+) is required as a cofactor.

The catalysed reaction is beta-L-arabinopyranose = L-ribulose. The protein operates within carbohydrate degradation; L-arabinose degradation via L-ribulose; D-xylulose 5-phosphate from L-arabinose (bacterial route): step 1/3. In terms of biological role, catalyzes the conversion of L-arabinose to L-ribulose. The polypeptide is L-arabinose isomerase (Salmonella choleraesuis (strain SC-B67)).